A 152-amino-acid chain; its full sequence is Deoxyuridine 5'-triphosphate nucleotidohydrolase (152 aa).

Substrate is bound by residues 71–73 (RSG), asparagine 84, and 88–90 (TID).

It belongs to the dUTPase family. It depends on Mg(2+) as a cofactor.

It carries out the reaction dUTP + H2O = dUMP + diphosphate + H(+). The protein operates within pyrimidine metabolism; dUMP biosynthesis; dUMP from dCTP (dUTP route): step 2/2. Its function is as follows. This enzyme is involved in nucleotide metabolism: it produces dUMP, the immediate precursor of thymidine nucleotides and it decreases the intracellular concentration of dUTP so that uracil cannot be incorporated into DNA. The polypeptide is Deoxyuridine 5'-triphosphate nucleotidohydrolase (Roseobacter denitrificans (strain ATCC 33942 / OCh 114) (Erythrobacter sp. (strain OCh 114))).